Here is a 118-residue protein sequence, read N- to C-terminus: MARIAGINIPDHKHTVIALTGIFGIGRTRARAICAATSVAEDAKIKELSEAQIDTLREAVAEYTVEGDLRREVSMNIKRLMDLGCYRGIRHRRSLPLRGQRTKTNARTRKGPRKPIRK.

A disordered region spans residues 94–118; the sequence is SLPLRGQRTKTNARTRKGPRKPIRK.

Belongs to the universal ribosomal protein uS13 family. In terms of assembly, part of the 30S ribosomal subunit. Forms a loose heterodimer with protein S19. Forms two bridges to the 50S subunit in the 70S ribosome.

Its function is as follows. Located at the top of the head of the 30S subunit, it contacts several helices of the 16S rRNA. In the 70S ribosome it contacts the 23S rRNA (bridge B1a) and protein L5 of the 50S subunit (bridge B1b), connecting the 2 subunits; these bridges are implicated in subunit movement. Contacts the tRNAs in the A and P-sites. The protein is Small ribosomal subunit protein uS13 of Shewanella woodyi (strain ATCC 51908 / MS32).